The sequence spans 408 residues: uncharacterized protein (408 aa).

4Fe-4S ferredoxin-type domains follow at residues I42–N72, K78–H107, S122–G151, G151–E181, K212–K241, G233–P265, I273–E302, and K304–P333. C52, C55, C58, C62, C87, C90, C93, C97, C131, C134, C137, C141, C160, C163, C166, and C170 together coordinate [4Fe-4S] cluster. Residues C282, C285, C288, and C292 each contribute to the [4Fe-4S] cluster site.

This is an uncharacterized protein from Methanocaldococcus jannaschii (strain ATCC 43067 / DSM 2661 / JAL-1 / JCM 10045 / NBRC 100440) (Methanococcus jannaschii).